The sequence spans 251 residues: Methylthioribulose-1-phosphate dehydratase (251 aa).

The segment at 1–26 (MTSVCDATNEDKENGSESTESQDKEH) is disordered. Residues 9-26 (NEDKENGSESTESQDKEH) are compositionally biased toward basic and acidic residues. Substrate is bound at residue cysteine 100. The Zn(2+) site is built by histidine 118 and histidine 120. Glutamate 142 functions as the Proton donor/acceptor in the catalytic mechanism. Histidine 198 contributes to the Zn(2+) binding site. The segment at 232–251 (MDPSAPPIEENHYYDVQQSQ) is disordered.

It belongs to the aldolase class II family. MtnB subfamily. Requires Zn(2+) as cofactor.

The protein resides in the cytoplasm. It carries out the reaction 5-(methylsulfanyl)-D-ribulose 1-phosphate = 5-methylsulfanyl-2,3-dioxopentyl phosphate + H2O. Its pathway is amino-acid biosynthesis; L-methionine biosynthesis via salvage pathway; L-methionine from S-methyl-5-thio-alpha-D-ribose 1-phosphate: step 2/6. Functionally, catalyzes the dehydration of methylthioribulose-1-phosphate (MTRu-1-P) into 2,3-diketo-5-methylthiopentyl-1-phosphate (DK-MTP-1-P). Functions in the methionine salvage pathway. May play a role in apoptosis. This Salmo salar (Atlantic salmon) protein is Methylthioribulose-1-phosphate dehydratase.